A 258-amino-acid chain; its full sequence is Axonemal dynein light intermediate polypeptide 1 (258 aa).

Disordered stretches follow at residues 19–60 and 207–231; these read RNTE…CVPD and VNEQ…EEKK. Low complexity predominate over residues 34-48; that stretch reads SPQQPGPSGSAPQLP. Residues 176-255 are a coiled coil; it reads MRKALQAEQG…LKAQLEGIIA (80 aa).

It belongs to the inner dynein arm light chain family. Interacts with CFAP45. Interacts with DYNC1H1.

Its subcellular location is the cell projection. The protein resides in the cilium. It localises to the flagellum. It is found in the dynein axonemal particle. The protein localises to the cytoplasm. Its function is as follows. Involved in sperm flagellum assembly. The sequence is that of Axonemal dynein light intermediate polypeptide 1 (DNALI1) from Macaca fascicularis (Crab-eating macaque).